A 392-amino-acid polypeptide reads, in one-letter code: Dual-specificity RNA methyltransferase RlmN (392 aa).

Glu116 functions as the Proton acceptor in the catalytic mechanism. Residues 122 to 364 form the Radical SAM core domain; the sequence is EEGRGTLCVS…SPIRTPRGED (243 aa). Cys129 and Cys369 are joined by a disulfide. 3 residues coordinate [4Fe-4S] cluster: Cys136, Cys140, and Cys143. S-adenosyl-L-methionine contacts are provided by residues 195–196, Ser227, 249–251, and Asn326; these read GE and SFH. Cys369 serves as the catalytic S-methylcysteine intermediate.

It belongs to the radical SAM superfamily. RlmN family. It depends on [4Fe-4S] cluster as a cofactor.

The protein resides in the cytoplasm. It catalyses the reaction adenosine(2503) in 23S rRNA + 2 reduced [2Fe-2S]-[ferredoxin] + 2 S-adenosyl-L-methionine = 2-methyladenosine(2503) in 23S rRNA + 5'-deoxyadenosine + L-methionine + 2 oxidized [2Fe-2S]-[ferredoxin] + S-adenosyl-L-homocysteine. It carries out the reaction adenosine(37) in tRNA + 2 reduced [2Fe-2S]-[ferredoxin] + 2 S-adenosyl-L-methionine = 2-methyladenosine(37) in tRNA + 5'-deoxyadenosine + L-methionine + 2 oxidized [2Fe-2S]-[ferredoxin] + S-adenosyl-L-homocysteine. In terms of biological role, specifically methylates position 2 of adenine 2503 in 23S rRNA and position 2 of adenine 37 in tRNAs. m2A2503 modification seems to play a crucial role in the proofreading step occurring at the peptidyl transferase center and thus would serve to optimize ribosomal fidelity. The sequence is that of Dual-specificity RNA methyltransferase RlmN from Cereibacter sphaeroides (strain ATCC 17029 / ATH 2.4.9) (Rhodobacter sphaeroides).